A 640-amino-acid polypeptide reads, in one-letter code: MDNCDVLIIGTGLQESILAAALSWQGTQVLHIDSNTYYGDSCSTLTIEQLKKWCGDVNSGKIHQFQDAQIYIPGGKQSNQYTSKDYGIDLTPKIMFCQSDLLSLLIKSRVYRYLEFQSLSNFHVFENDDFQQKVNATTKQDIFTDKSLSLMTKRYLMKFLKFLLLDPDYKQRVKPYADTPIQVFLQQEFKLEEPQINELVYSIGLSYKEQTSTKQALIRMKRFLSSFDVYGKFPCMVSKFGGPGELSQGFCRSAAVAGTTYKLNTNLTDFDPISKIAHFNDGSHIKINEKIIISPTQLPKFLQSSYNKVVENLQPYYVTRLVTVVRRDCKEWMSGNESSAIVVFPPHSLPTDNQHSVQVIIQNGNSGVCPDGQAIWFSSTVEQDLSRAKVDLESAFEKMETSLLRESSEEIVNDILGDNNNNNNNNNNNNNNNNNNNNNDFVMNAQGTTTPVLVNSFKLGSSLINFVPKDKLEIVCKLGYVEKTFINPDLSNIFKPTKTNNIVYKDVEDANNEIIFTNMPSSELSYDGIITDVKSIYQRITGTTDDFFDVDFEDEEDEYDRNNQPVVQPKRSSVVGGIVGGGSITSLTALREQHNENNHSDNAIDSDEDEDEDINDMNDNEEEDDHGRGPEPFGADEMEL.

Disordered stretches follow at residues 414-439 and 594-640; these read DILG…NNNN and HNEN…EMEL. Over residues 419–439 the composition is skewed to low complexity; sequence NNNNNNNNNNNNNNNNNNNNN. A compositionally biased stretch (acidic residues) spans 604–624; it reads IDSDEDEDEDINDMNDNEEED.

Belongs to the Rab GDI family.

Its function is as follows. Substrate-binding subunit (component A) of the Rab geranylgeranyltransferase (GGTase) complex. Binds unprenylated Rab proteins and presents the substrate peptide to the catalytic component B. The component A is thought to be regenerated by transferring its prenylated Rab back to the donor membrane. The sequence is that of Rab proteins geranylgeranyltransferase component A (MRS6) from Candida albicans (Yeast).